A 703-amino-acid chain; its full sequence is Polyribonucleotide nucleotidyltransferase (703 aa).

Mg(2+) is bound by residues aspartate 485 and aspartate 491. A KH domain is found at 552 to 611 (PRAYTINIDTDKIRTLIGTGGKTINKIIEETGVKIDIREDGTVFVLSSDADSANRALKMI). Positions 621-689 (GEVYLGKVTK…NQGRVNLSRK (69 aa)) constitute an S1 motif domain.

Belongs to the polyribonucleotide nucleotidyltransferase family. Mg(2+) is required as a cofactor.

Its subcellular location is the cytoplasm. It carries out the reaction RNA(n+1) + phosphate = RNA(n) + a ribonucleoside 5'-diphosphate. Involved in mRNA degradation. Catalyzes the phosphorolysis of single-stranded polyribonucleotides processively in the 3'- to 5'-direction. The protein is Polyribonucleotide nucleotidyltransferase of Clostridium acetobutylicum (strain ATCC 824 / DSM 792 / JCM 1419 / IAM 19013 / LMG 5710 / NBRC 13948 / NRRL B-527 / VKM B-1787 / 2291 / W).